A 292-amino-acid polypeptide reads, in one-letter code: MFSGSIVALITPFTPDGEVDYISLKKLVDFHVDAGTDAIVSVGTTGESATLTVEEHVKVVAKTVEFAEGRLPIIAGTGANATHEAVTFSRLLNNTGIAGYLSVTPYYNKPTQEGLFLHYNAIAQETDIPVILYNVPGRTAVDMRPETVARLSEIKNIVALKDATGDLSRVAKHREMCKEGFVLLSGDDATGLEFVKLGGQGVISVTNNIAAADMAKMMHLALDGKFDEAASINQRLMTLHKNLFIESSPIPVKWAAHKMGLIANGDLRLPLTQLSEPARPIVAQALSEACIY.

Thr45 provides a ligand contact to pyruvate. The active-site Proton donor/acceptor is the Tyr133. Lys161 functions as the Schiff-base intermediate with substrate in the catalytic mechanism. A pyruvate-binding site is contributed by Ile203.

The protein belongs to the DapA family. In terms of assembly, homotetramer; dimer of dimers.

It is found in the cytoplasm. The catalysed reaction is L-aspartate 4-semialdehyde + pyruvate = (2S,4S)-4-hydroxy-2,3,4,5-tetrahydrodipicolinate + H2O + H(+). It participates in amino-acid biosynthesis; L-lysine biosynthesis via DAP pathway; (S)-tetrahydrodipicolinate from L-aspartate: step 3/4. Catalyzes the condensation of (S)-aspartate-beta-semialdehyde [(S)-ASA] and pyruvate to 4-hydroxy-tetrahydrodipicolinate (HTPA). This is 4-hydroxy-tetrahydrodipicolinate synthase from Vibrio cholerae serotype O1 (strain ATCC 39541 / Classical Ogawa 395 / O395).